A 165-amino-acid chain; its full sequence is Crossover junction endodeoxyribonuclease RuvC (165 aa).

Active-site residues include Asp-7, Glu-68, and His-142. Mg(2+) is bound by residues Asp-7, Glu-68, and His-142.

Belongs to the RuvC family. As to quaternary structure, homodimer which binds Holliday junction (HJ) DNA. The HJ becomes 2-fold symmetrical on binding to RuvC with unstacked arms; it has a different conformation from HJ DNA in complex with RuvA. In the full resolvosome a probable DNA-RuvA(4)-RuvB(12)-RuvC(2) complex forms which resolves the HJ. Mg(2+) is required as a cofactor.

Its subcellular location is the cytoplasm. The enzyme catalyses Endonucleolytic cleavage at a junction such as a reciprocal single-stranded crossover between two homologous DNA duplexes (Holliday junction).. Its function is as follows. The RuvA-RuvB-RuvC complex processes Holliday junction (HJ) DNA during genetic recombination and DNA repair. Endonuclease that resolves HJ intermediates. Cleaves cruciform DNA by making single-stranded nicks across the HJ at symmetrical positions within the homologous arms, yielding a 5'-phosphate and a 3'-hydroxyl group; requires a central core of homology in the junction. The consensus cleavage sequence is 5'-(A/T)TT(C/G)-3'. Cleavage occurs on the 3'-side of the TT dinucleotide at the point of strand exchange. HJ branch migration catalyzed by RuvA-RuvB allows RuvC to scan DNA until it finds its consensus sequence, where it cleaves and resolves the cruciform DNA. This Anaplasma marginale (strain Florida) protein is Crossover junction endodeoxyribonuclease RuvC.